Consider the following 265-residue polypeptide: Glutamate racemase (265 aa).

Substrate contacts are provided by residues 9-10 (DS) and 41-42 (YS). The active-site Proton donor/acceptor is Cys73. Residue 74-75 (NT) participates in substrate binding. The active-site Proton donor/acceptor is the Cys184. 185–186 (TH) lines the substrate pocket.

Belongs to the aspartate/glutamate racemases family.

It carries out the reaction L-glutamate = D-glutamate. Its pathway is cell wall biogenesis; peptidoglycan biosynthesis. Provides the (R)-glutamate required for cell wall biosynthesis. The chain is Glutamate racemase from Haemophilus ducreyi (strain 35000HP / ATCC 700724).